The chain runs to 304 residues: UDP-N-acetylenolpyruvoylglucosamine reductase (304 aa).

In terms of domain architecture, FAD-binding PCMH-type spans 33-198 (RVGGPVDILL…ITATFCFESG (166 aa)). The active site involves R177. S227 (proton donor) is an active-site residue. Residue E297 is part of the active site.

This sequence belongs to the MurB family. FAD is required as a cofactor.

The protein resides in the cytoplasm. It carries out the reaction UDP-N-acetyl-alpha-D-muramate + NADP(+) = UDP-N-acetyl-3-O-(1-carboxyvinyl)-alpha-D-glucosamine + NADPH + H(+). The protein operates within cell wall biogenesis; peptidoglycan biosynthesis. Its function is as follows. Cell wall formation. This is UDP-N-acetylenolpyruvoylglucosamine reductase from Clostridium botulinum (strain Eklund 17B / Type B).